The primary structure comprises 293 residues: Urease accessory protein UreD (293 aa).

A disordered region spans residues 1–22; that stretch reads MAVAQQAWSPGADPAPSAAPVS. A compositionally biased stretch (low complexity) spans 7-22; it reads AWSPGADPAPSAAPVS.

It belongs to the UreD family. UreD, UreF and UreG form a complex that acts as a GTP-hydrolysis-dependent molecular chaperone, activating the urease apoprotein by helping to assemble the nickel containing metallocenter of UreC. The UreE protein probably delivers the nickel.

The protein resides in the cytoplasm. Its function is as follows. Required for maturation of urease via the functional incorporation of the urease nickel metallocenter. The sequence is that of Urease accessory protein UreD from Alkalilimnicola ehrlichii (strain ATCC BAA-1101 / DSM 17681 / MLHE-1).